We begin with the raw amino-acid sequence, 1068 residues long: tRNA wybutosine-synthesizing protein 4 (1068 aa).

The segment at 1-31 (MCPPEQPAKAMAPSKSNQAAKSAVPTKEEKS) is disordered. Residues Arg81, Gly107, Asp134, 181–182 (DL), and Glu208 each bind S-adenosyl-L-methionine. One can recognise a JmjC domain in the interval 876–1024 (ADFPSLSSDF…ALGRDVYGNR (149 aa)).

Belongs to the methyltransferase superfamily. LCMT family.

It catalyses the reaction 7-[(3S)-3-amino-3-carboxypropyl]wyosine(37) in tRNA(Phe) + S-adenosyl-L-methionine = 7-[(3S)-(3-amino-3-methoxycarbonyl)propyl]wyosine(37) in tRNA(Phe) + S-adenosyl-L-homocysteine. It carries out the reaction 7-[(3S)-(3-amino-3-methoxycarbonyl)propyl]wyosine(37) in tRNA(Phe) + S-adenosyl-L-methionine + CO2 = wybutosine(37) in tRNA(Phe) + S-adenosyl-L-homocysteine + 2 H(+). Its pathway is tRNA modification; wybutosine-tRNA(Phe) biosynthesis. Its function is as follows. Probable S-adenosyl-L-methionine-dependent methyltransferase that acts as a component of the wybutosine biosynthesis pathway. Wybutosine is a hyper modified guanosine with a tricyclic base found at the 3'-position adjacent to the anticodon of eukaryotic phenylalanine tRNA. May methylate the carboxyl group of leucine residues to form alpha-leucine ester residues. This is tRNA wybutosine-synthesizing protein 4 (ppm2) from Emericella nidulans (strain FGSC A4 / ATCC 38163 / CBS 112.46 / NRRL 194 / M139) (Aspergillus nidulans).